The primary structure comprises 837 residues: Mannosyl-oligosaccharide glucosidase (837 aa).

The span at 1–10 (MARGERRRRA) shows a compositional bias: basic residues. Topologically, residues 1–38 (MARGERRRRAVPAEGVRTAERAARGGPGRRDGRGGGPR) are cytoplasmic. Residues 1-39 (MARGERRRRAVPAEGVRTAERAARGGPGRRDGRGGGPRS) are disordered. Residues 3–9 (RGERRRR) carry the Endoplasmic reticulum targeting motif. Residues 17–33 (RTAERAARGGPGRRDGR) show a composition bias toward basic and acidic residues. The chain crosses the membrane as a helical; Signal-anchor for type II membrane protein span at residues 39–59 (STAGGVALAVVVLSLALGMSG). Over 60 to 837 (RWVLAWYRAR…LVLLAMAEDY (778 aa)) the chain is Lumenal. Residues 76-137 (SAPPVLPADS…PGTPKLRHTC (62 aa)) form a required for endoplasmic reticulum targeting region. The active-site Proton donor is the Asp-583. Asn-657 is a glycosylation site (N-linked (GlcNAc...) asparagine). The active-site Proton acceptor is the Glu-807.

This sequence belongs to the glycosyl hydrolase 63 family.

The protein resides in the endoplasmic reticulum membrane. It carries out the reaction N(4)-(alpha-D-Glc-(1-&gt;2)-alpha-D-Glc-(1-&gt;3)-alpha-D-Glc-(1-&gt;3)-alpha-D-Man-(1-&gt;2)-alpha-D-Man-(1-&gt;2)-alpha-D-Man-(1-&gt;3)-[alpha-D-Man-(1-&gt;2)-alpha-D-Man-(1-&gt;3)-[alpha-D-Man-(1-&gt;2)-alpha-D-Man-(1-&gt;6)]-alpha-D-Man-(1-&gt;6)]-beta-D-Man-(1-&gt;4)-beta-D-GlcNAc-(1-&gt;4)-beta-D-GlcNAc)-L-asparaginyl-[protein] + H2O = N(4)-(alpha-D-Glc-(1-&gt;3)-alpha-D-Glc-(1-&gt;3)-alpha-D-Man-(1-&gt;2)-alpha-D-Man-(1-&gt;2)-alpha-D-Man-(1-&gt;3)-[alpha-D-Man-(1-&gt;2)-alpha-D-Man-(1-&gt;3)-[alpha-D-Man-(1-&gt;2)-alpha-D-Man-(1-&gt;6)]-alpha-D-Man-(1-&gt;6)]-beta-D-Man-(1-&gt;4)-beta-D-GlcNAc-(1-&gt;4)-beta-D-GlcNAc)-L-asparaginyl-[protein] + beta-D-glucose. The protein operates within glycan metabolism; N-glycan degradation. With respect to regulation, inhibited by 1-deoxynojirimycin (40% inhibition) and N,N-dimethyl-deoxynojirimycin (85% inhibition). Its function is as follows. In the context of N-glycan degradation, cleaves the distal alpha 1,2-linked glucose residue from the Glc(3)Man(9)GlcNAc(2) oligosaccharide precursor in a highly specific manner. This is Mannosyl-oligosaccharide glucosidase from Homo sapiens (Human).